The chain runs to 458 residues: Alpha-1,3/1,6-mannosyltransferase ALG2 (458 aa).

Residues asparagine 57 and asparagine 169 are each glycosylated (N-linked (GlcNAc...) asparagine). The chain crosses the membrane as a helical span at residues 438-458 (NISIIYVVSIIFAVLLKVFVF).

It belongs to the glycosyltransferase group 1 family.

It localises to the endoplasmic reticulum membrane. The enzyme catalyses a beta-D-Man-(1-&gt;4)-beta-D-GlcNAc-(1-&gt;4)-alpha-D-GlcNAc-diphospho-di-trans,poly-cis-dolichol + GDP-alpha-D-mannose = an alpha-D-Man-(1-&gt;3)-beta-D-Man-(1-&gt;4)-beta-D-GlcNAc-(1-&gt;4)-alpha-D-GlcNAc-diphospho-di-trans,poly-cis-dolichol + GDP + H(+). It carries out the reaction an alpha-D-Man-(1-&gt;3)-beta-D-Man-(1-&gt;4)-beta-D-GlcNAc-(1-&gt;4)-alpha-D-GlcNAc-diphospho-di-trans,poly-cis-dolichol + GDP-alpha-D-mannose = an alpha-D-Man-(1-&gt;3)-[alpha-D-Man-(1-&gt;6)]-beta-D-Man-(1-&gt;4)-beta-D-GlcNAc-(1-&gt;4)-alpha-D-GlcNAc-diphospho-di-trans,poly-cis-dolichol + GDP + H(+). Its pathway is protein modification; protein glycosylation. In terms of biological role, mannosylates Man(2)GlcNAc(2)-dolichol diphosphate and Man(1)GlcNAc(2)-dolichol diphosphate to form Man(3)GlcNAc(2)-dolichol diphosphate. This chain is Alpha-1,3/1,6-mannosyltransferase ALG2 (ALG2), found in Candida glabrata (strain ATCC 2001 / BCRC 20586 / JCM 3761 / NBRC 0622 / NRRL Y-65 / CBS 138) (Yeast).